A 444-amino-acid chain; its full sequence is Ribosomal protein uS12 methylthiotransferase RimO (444 aa).

The MTTase N-terminal domain occupies 3–119 (IKIGLVSLGC…IARAVRRVLE (117 aa)). The [4Fe-4S] cluster site is built by cysteine 12, cysteine 48, cysteine 82, cysteine 156, cysteine 160, and cysteine 163. The 231-residue stretch at 142–372 (ATPPYTAYLK…MMLQQEISLQ (231 aa)) folds into the Radical SAM core domain. The TRAM domain occupies 375-444 (LKRVGEVIEV…EYDLTGETVL (70 aa)).

Belongs to the methylthiotransferase family. RimO subfamily. The cofactor is [4Fe-4S] cluster.

The protein resides in the cytoplasm. The enzyme catalyses L-aspartate(89)-[ribosomal protein uS12]-hydrogen + (sulfur carrier)-SH + AH2 + 2 S-adenosyl-L-methionine = 3-methylsulfanyl-L-aspartate(89)-[ribosomal protein uS12]-hydrogen + (sulfur carrier)-H + 5'-deoxyadenosine + L-methionine + A + S-adenosyl-L-homocysteine + 2 H(+). Its function is as follows. Catalyzes the methylthiolation of an aspartic acid residue of ribosomal protein uS12. The sequence is that of Ribosomal protein uS12 methylthiotransferase RimO from Pelotomaculum thermopropionicum (strain DSM 13744 / JCM 10971 / SI).